We begin with the raw amino-acid sequence, 694 residues long: Putative ankyrin repeat protein RBE_0921 (694 aa).

10 ANK repeats span residues 122–151 (LGKT…NINV), 155–185 (NGRN…NINS), 216–245 (FNRT…NVEA), 249–275 (TGET…NTEA), 279–317 (LGRT…NPNA), 321–350 (YGFT…KFKK), 351–382 (NRYE…NIND), 384–413 (NGQN…DNGK), 423–452 (QRNT…DINA), and 456–485 (DGET…DINI).

The sequence is that of Putative ankyrin repeat protein RBE_0921 from Rickettsia bellii (strain RML369-C).